Consider the following 292-residue polypeptide: 33 kDa chaperonin (292 aa).

Cystine bridges form between Cys238-Cys240 and Cys271-Cys274.

This sequence belongs to the HSP33 family. In terms of processing, under oxidizing conditions two disulfide bonds are formed involving the reactive cysteines. Under reducing conditions zinc is bound to the reactive cysteines and the protein is inactive.

Its subcellular location is the cytoplasm. Redox regulated molecular chaperone. Protects both thermally unfolding and oxidatively damaged proteins from irreversible aggregation. Plays an important role in the bacterial defense system toward oxidative stress. This Alkaliphilus metalliredigens (strain QYMF) protein is 33 kDa chaperonin.